The sequence spans 356 residues: Arginine kinase (356 aa).

The Phosphagen kinase N-terminal domain occupies 8 to 91 (EKLEAGFKKL…FDPIIEDYHG (84 aa)). 64–68 (GVGIY) serves as a coordination point for substrate. The region spanning 119–356 (YVISTRVRCG…LELIKIEGSL (238 aa)) is the Phosphagen kinase C-terminal domain. ATP contacts are provided by residues 122-126 (STRVR) and His185. Glu225 is a substrate binding site. Position 229 (Arg229) interacts with ATP. A substrate-binding site is contributed by Cys271. ATP-binding positions include 280 to 284 (RASVH) and 309 to 314 (RGSTGE). Residue Glu314 coordinates substrate.

The protein belongs to the ATP:guanido phosphotransferase family.

The enzyme catalyses L-arginine + ATP = N(omega)-phospho-L-arginine + ADP + H(+). This chain is Arginine kinase (ARGK), found in Schistocerca americana (American grasshopper).